The primary structure comprises 210 residues: Putative odorant-binding protein A5 (210 aa).

The signal sequence occupies residues 1–19 (MKLPALHLLFLGFICLARS).

This sequence belongs to the phosphatidylethanolamine-binding protein family. In terms of tissue distribution, cells at the bases of a few scattered sensilla on the posterior surface of the antenna.

The protein resides in the secreted. The chain is Putative odorant-binding protein A5 (a5) from Drosophila melanogaster (Fruit fly).